A 358-amino-acid polypeptide reads, in one-letter code: Dynein axonemal assembly factor 10 (358 aa).

6 WD repeats span residues 63–105 (EKKH…QPVF), 109–154 (AHAS…APVA), 162–205 (NNVR…VRWE), 207–249 (NVRN…PKKG), 258–298 (TAGA…QRKV), and 320–358 (ISTQ…LNKV).

In terms of assembly, interacts with PIH1D1; the interaction associates DNAAF10 with the R2TP complex. Interacts with several dynein axonemal assembly factors.

Its subcellular location is the dynein axonemal particle. Key assembly factor specifically required for the stability of axonemal dynein heavy chains in cytoplasm. This chain is Dynein axonemal assembly factor 10 (dnaaf10), found in Chlamydomonas reinhardtii (Chlamydomonas smithii).